We begin with the raw amino-acid sequence, 162 residues long: MSGLTHFDAAGHAHMVDVGGKQETQRVAVARGTIRMLPATFALIRDGKAKKGDVLGVARIAAIQGAKRTADLIPLCHPLALTRVAVDFELDDALPGVHCVAQVETFGRTGVEMEALTAVQVGLLTVYDMCKAVDRGMVITDVSVREKRGGKSGDWTAEDAAG.

Substrate is bound by residues 75–77 (LCH) and 113–114 (ME). Residue Asp-128 is part of the active site.

This sequence belongs to the MoaC family. As to quaternary structure, homohexamer; trimer of dimers.

It carries out the reaction (8S)-3',8-cyclo-7,8-dihydroguanosine 5'-triphosphate = cyclic pyranopterin phosphate + diphosphate. It participates in cofactor biosynthesis; molybdopterin biosynthesis. Its function is as follows. Catalyzes the conversion of (8S)-3',8-cyclo-7,8-dihydroguanosine 5'-triphosphate to cyclic pyranopterin monophosphate (cPMP). This is Cyclic pyranopterin monophosphate synthase from Burkholderia vietnamiensis (strain G4 / LMG 22486) (Burkholderia cepacia (strain R1808)).